The sequence spans 469 residues: Regulator of G-protein signaling 7 (469 aa).

The DEP domain maps to 37–112; that stretch reads EKNGIPIRTV…DDGTFYRFQT (76 aa). Residues S229 and S241 each carry the phosphoserine modification. A disordered region spans residues 235–256; it reads NDIRSHSPTHTPTPETKPPTED. T243 carries the post-translational modification Phosphothreonine. A G protein gamma domain is found at 255–316; the sequence is EDELQQQIKY…LSDDTTFWEL (62 aa). Positions 333–448 constitute an RGS domain; the sequence is GMDEALKDPV…IRSSAYQELL (116 aa). S434 bears the Phosphoserine mark.

In terms of assembly, interacts with GNB5, forming the RGS7-GNB5 complex. Interacts with GPR158; promotes the GTPase activator activity of the RGS7-GNB5 complex in absence of glycine, in contrast GTPase activator activity of the RGS7-GNB5 complex is inhibited in presence of glycine. Interacts with GPR179. Interacts with PKD1; this prevents rapid proteasomal degradation. Interacts with RGS7BP, leading to regulate the subcellular location of the heterodimer formed with GNB5. Interacts (phosphorylated form) with 14-3-3 protein YWHAQ. Interacts with SNAPIN. Interacts with GNAI1. Interacts with GNAO1, GNAI3 and GNAZ. In terms of processing, palmitoylated. Ubiquitinated, leading to rapid proteasomal degradation. Post-translationally, phosphorylation and subsequent interaction with 14-3-3 proteins inhibits GAP activity. Detected in retina (at protein level).

It localises to the cytoplasm. The protein resides in the cytosol. Its subcellular location is the cell membrane. The protein localises to the membrane. In terms of biological role, GTPase activator component of the RGS7-GNB5 complex that regulates G protein-coupled receptor signaling cascades. The RGS7-GNB5 complex acts as an inhibitor signal transduction by promoting the GTPase activity of G protein alpha subunits, such as GNAO1, thereby driving them into their inactive GDP-bound form. May play a role in synaptic vesicle exocytosis. Glycine-dependent regulation of the RGS7-GNB5 complex by GPR158 affects mood and cognition via its ability to regulate neuronal excitability in L2/L3 pyramidal neurons of the prefrontal cortex. Modulates the activity of potassium channels that are activated by GNAO1 in response to muscarinic acetylcholine receptor M2/CHRM2 signaling. This chain is Regulator of G-protein signaling 7 (RGS7), found in Bos taurus (Bovine).